A 340-amino-acid polypeptide reads, in one-letter code: Phenylalanine--tRNA ligase alpha subunit (340 aa).

Residue E255 participates in Mg(2+) binding.

Belongs to the class-II aminoacyl-tRNA synthetase family. Phe-tRNA synthetase alpha subunit type 1 subfamily. Tetramer of two alpha and two beta subunits. It depends on Mg(2+) as a cofactor.

Its subcellular location is the cytoplasm. The catalysed reaction is tRNA(Phe) + L-phenylalanine + ATP = L-phenylalanyl-tRNA(Phe) + AMP + diphosphate + H(+). This Desulfitobacterium hafniense (strain DSM 10664 / DCB-2) protein is Phenylalanine--tRNA ligase alpha subunit.